Reading from the N-terminus, the 243-residue chain is MRLGVNIDHIATLREARKTTEPDPIKGALIAIEAGADQITLHLREDRRHIQDEDLFRLKCELKDTNIPINLEMAPTYEMQNIALEALPNNVTLVPEKRQEITTEGGLDVVSMIDYLKDFIKPIKQQGITVSLFIDPDYEQIDASVEVGADAIEIHTGEYANAYGKNVEKELERIKKAAKYAKEKGLKVYAGHGLTYQNVSEIAKIKEIEELNIGHSIIANAVFLGLYEAVKKMKEIILNARKE.

N6 contacts 3-amino-2-oxopropyl phosphate. Residue 8-9 (DH) participates in 1-deoxy-D-xylulose 5-phosphate binding. R17 is a binding site for 3-amino-2-oxopropyl phosphate. Catalysis depends on H42, which acts as the Proton acceptor. 1-deoxy-D-xylulose 5-phosphate contacts are provided by R44 and H49. The active-site Proton acceptor is E72. A 1-deoxy-D-xylulose 5-phosphate-binding site is contributed by T102. H192 functions as the Proton donor in the catalytic mechanism. 3-amino-2-oxopropyl phosphate is bound by residues G193 and 214 to 215 (GH).

Belongs to the PNP synthase family. Homooctamer; tetramer of dimers.

The protein localises to the cytoplasm. The enzyme catalyses 3-amino-2-oxopropyl phosphate + 1-deoxy-D-xylulose 5-phosphate = pyridoxine 5'-phosphate + phosphate + 2 H2O + H(+). It participates in cofactor biosynthesis; pyridoxine 5'-phosphate biosynthesis; pyridoxine 5'-phosphate from D-erythrose 4-phosphate: step 5/5. Functionally, catalyzes the complicated ring closure reaction between the two acyclic compounds 1-deoxy-D-xylulose-5-phosphate (DXP) and 3-amino-2-oxopropyl phosphate (1-amino-acetone-3-phosphate or AAP) to form pyridoxine 5'-phosphate (PNP) and inorganic phosphate. The protein is Pyridoxine 5'-phosphate synthase of Sulfurihydrogenibium sp. (strain YO3AOP1).